Consider the following 412-residue polypeptide: Cathepsin D (412 aa).

The first 20 residues, 1–20 (MQPSSLLPLALCLLAAPASA), serve as a signal peptide directing secretion. Positions 21-64 (LVRIPLHKFTSIRRTMSEVGGSVEDLIAKGPVSKYSQAVPAVTE) are cleaved as a propeptide — activation peptide. The O-linked (GalNAc...) threonine glycan is linked to Thr63. One can recognise a Peptidase A1 domain in the interval 79 to 407 (YYGEIGIGTP…DRDNNRVGFA (329 aa)). 2 disulfide bridges follow: Cys91–Cys160 and Cys110–Cys117. Residue Asp97 is part of the active site. Residues Asn134 and Asn263 are each glycosylated (N-linked (GlcNAc...) asparagine). Cysteines 286 and 290 form a disulfide. Residue Asp295 is part of the active site. A disulfide bridge links Cys329 with Cys366.

It belongs to the peptidase A1 family. As to quaternary structure, consists of a light chain and a heavy chain. Interacts with ADAM30; this leads to activation of CTSD. Interacts with GRN; stabilizes CTSD; increases its proteolytic activity. Post-translationally, N- and O-glycosylated. Undergoes proteolytic cleavage and activation by ADAM30. In terms of processing, as well as the major heavy chain which starts at Leu-169, 2 minor forms starting at Gly-170 and Gly-171 have been identified. An additional form starting at Ala-168 has also been identified. As to expression, expressed in the aorta extracellular space (at protein level). Expressed in liver (at protein level).

The protein localises to the lysosome. It is found in the melanosome. Its subcellular location is the secreted. It localises to the extracellular space. It catalyses the reaction Specificity similar to, but narrower than, that of pepsin A. Does not cleave the 4-Gln-|-His-5 bond in B chain of insulin.. Acid protease active in intracellular protein breakdown. Plays a role in APP processing following cleavage and activation by ADAM30 which leads to APP degradation. Involved in the pathogenesis of several diseases such as breast cancer and possibly Alzheimer disease. The protein is Cathepsin D (CTSD) of Homo sapiens (Human).